Here is a 152-residue protein sequence, read N- to C-terminus: MRLNELSPPPGSRRARKRVGRGEGSGYGKTSGRGQKGAKARSGTKAYTTYEGGQMPLQRRLPRLKGEARGRHTPAHPKVYDPVNVGELAAVEGDTIGLDELRAAGLIRKKADTLVKILGDGEIDRPVTVRAHAFSRAAREKIEAAGGRAEVL.

The segment at 1–79 (MRLNELSPPP…GRHTPAHPKV (79 aa)) is disordered. Residues 22–35 (GEGSGYGKTSGRGQ) show a composition bias toward gly residues.

It belongs to the universal ribosomal protein uL15 family. As to quaternary structure, part of the 50S ribosomal subunit.

Functionally, binds to the 23S rRNA. The sequence is that of Large ribosomal subunit protein uL15 from Rubrobacter xylanophilus (strain DSM 9941 / JCM 11954 / NBRC 16129 / PRD-1).